Reading from the N-terminus, the 395-residue chain is Ribosomal RNA large subunit methyltransferase G (395 aa).

Belongs to the methyltransferase superfamily. RlmG family.

Its subcellular location is the cytoplasm. The catalysed reaction is guanosine(1835) in 23S rRNA + S-adenosyl-L-methionine = N(2)-methylguanosine(1835) in 23S rRNA + S-adenosyl-L-homocysteine + H(+). In terms of biological role, specifically methylates the guanine in position 1835 (m2G1835) of 23S rRNA. This Yersinia pestis (strain Pestoides F) protein is Ribosomal RNA large subunit methyltransferase G.